Reading from the N-terminus, the 70-residue chain is Large ribosomal subunit protein uL29 (70 aa).

The protein belongs to the universal ribosomal protein uL29 family.

This chain is Large ribosomal subunit protein uL29, found in Clostridium botulinum (strain Alaska E43 / Type E3).